Here is a 96-residue protein sequence, read N- to C-terminus: MSIRPLHDRVLVRREEEETKSAGGIVLPGSAAEKPSRGEVIAVGNGKITENGDVRPLDVKAGDTVIFGQYSGSTVKVEGEELLIMSEAEILAVVED.

It belongs to the GroES chaperonin family. As to quaternary structure, heptamer of 7 subunits arranged in a ring. Interacts with the chaperonin GroEL.

Its subcellular location is the cytoplasm. Functionally, together with the chaperonin GroEL, plays an essential role in assisting protein folding. The GroEL-GroES system forms a nano-cage that allows encapsulation of the non-native substrate proteins and provides a physical environment optimized to promote and accelerate protein folding. GroES binds to the apical surface of the GroEL ring, thereby capping the opening of the GroEL channel. This chain is Co-chaperonin GroES, found in Alcanivorax borkumensis (strain ATCC 700651 / DSM 11573 / NCIMB 13689 / SK2).